Here is a 366-residue protein sequence, read N- to C-terminus: A-type ATP synthase subunit C (366 aa).

It belongs to the V-ATPase V0D/AC39 subunit family. In terms of assembly, has multiple subunits with at least A(3), B(3), C, D, E, F, H, I and proteolipid K(x).

It localises to the cell membrane. Functionally, component of the A-type ATP synthase that produces ATP from ADP in the presence of a proton gradient across the membrane. The chain is A-type ATP synthase subunit C from Thermococcus gammatolerans (strain DSM 15229 / JCM 11827 / EJ3).